The sequence spans 404 residues: Dihydrolipoyllysine-residue acetyltransferase component of pyruvate dehydrogenase complex (404 aa).

One can recognise a Lipoyl-binding domain in the interval 2-78 (PIKILMPALS…PVNSLIAVLS (77 aa)). N6-lipoyllysine is present on lysine 43. In terms of domain architecture, Peripheral subunit-binding (PSBD) spans 128-165 (FASPLAKRLAKIRNIRLESVQGSGPHGRIVKQDILSYS). Histidine 377 is an active-site residue.

Belongs to the 2-oxoacid dehydrogenase family. Forms a 24-polypeptide structural core with octahedral symmetry. (R)-lipoate serves as cofactor.

The enzyme catalyses N(6)-[(R)-dihydrolipoyl]-L-lysyl-[protein] + acetyl-CoA = N(6)-[(R)-S(8)-acetyldihydrolipoyl]-L-lysyl-[protein] + CoA. Functionally, the pyruvate dehydrogenase complex catalyzes the overall conversion of pyruvate to acetyl-CoA and CO(2). It contains multiple copies of three enzymatic components: pyruvate dehydrogenase (E1), dihydrolipoamide acetyltransferase (E2) and lipoamide dehydrogenase (E3). The chain is Dihydrolipoyllysine-residue acetyltransferase component of pyruvate dehydrogenase complex (pdhC) from Rickettsia typhi (strain ATCC VR-144 / Wilmington).